Here is a 185-residue protein sequence, read N- to C-terminus: MSQVKLNLIAAACDNMGIGVNGALPWRLKKEMAYFTTMTSKVSEPTKVNAVIMGRRTWDCIPDKYRPLQDRVNIVLTHNVDSVKENVPEGVMVFPGLDEAIKYIEGREDIESTWVIGGSSIYRAAMTHPNCGKIYLTEIQKSFDCDTFFPNIDKQQFHLVDEEQIPGEKQVEGNISYYFRVYKKL.

The 180-residue stretch at 5 to 184 folds into the DHFR domain; sequence KLNLIAAACD…ISYYFRVYKK (180 aa). Residues alanine 11 and 17 to 23 contribute to the NADP(+) site; that span reads GIGVNGA. A substrate-binding site is contributed by 31 to 36; it reads EMAYFT. 55 to 57 provides a ligand contact to NADP(+); that stretch reads RRT. Residue arginine 71 coordinates substrate. Residues 77-79 and 117-124 contribute to the NADP(+) site; these read THN and GGSSIYRA.

Belongs to the dihydrofolate reductase family.

The enzyme catalyses (6S)-5,6,7,8-tetrahydrofolate + NADP(+) = 7,8-dihydrofolate + NADPH + H(+). The protein operates within cofactor biosynthesis; tetrahydrofolate biosynthesis; 5,6,7,8-tetrahydrofolate from 7,8-dihydrofolate: step 1/1. With respect to regulation, activated by dithiothreitol and p-chloromercuribenzoate. Inhibited by trimethoprim, methotrexate, sodium tetrathionate and hydroxymercuribenzoate. Key enzyme in folate metabolism. Catalyzes an essential reaction for de novo glycine and purine synthesis, and for DNA precursor synthesis. This Heliothis virescens (Tobacco budworm moth) protein is Dihydrofolate reductase (DHFR).